Reading from the N-terminus, the 172-residue chain is Large ribosomal subunit protein uL10 (172 aa).

It belongs to the universal ribosomal protein uL10 family. Part of the ribosomal stalk of the 50S ribosomal subunit. The N-terminus interacts with L11 and the large rRNA to form the base of the stalk. The C-terminus forms an elongated spine to which L12 dimers bind in a sequential fashion forming a multimeric L10(L12)X complex.

Forms part of the ribosomal stalk, playing a central role in the interaction of the ribosome with GTP-bound translation factors. This is Large ribosomal subunit protein uL10 from Prosthecochloris aestuarii (strain DSM 271 / SK 413).